The chain runs to 87 residues: Defensin alpha-like protein 1 (87 aa).

The N-terminal stretch at 1–19 is a signal peptide; it reads MKTLILLSALVLLALQVQA. Positions 20-56 are excised as a propeptide; sequence DPIQEAEEETKTEEQPADEDQDVSVSFEGPEASAVQD. Acidic residues predominate over residues 23–41; the sequence is QEAEEETKTEEQPADEDQD. The segment at 23 to 43 is disordered; sequence QEAEEETKTEEQPADEDQDVS.

It belongs to the alpha-defensin family. In terms of assembly, antiparallel homodimer; disulfide-linked. Specifically expressed in small intestine (jejunum and ileum). Probably expressed by Paneth cells at the base of intestinal crypts. Coexpressed with MMP7 in small intestine.

The protein resides in the secreted. Its function is as follows. Intestinal defense peptide. Has potent antibacterial activity against Gram-negative bacteria E.coli O157:H7, S.typhimurium DT104, and K.pneumoniae; and against Gram-positive bacteria S.aureus, methicillin-resistant S.aureus and L.monocytogenes. Remains active in the presence of NaCl and Mg(2+). Probably functions by disrupting bacterial membrane integrity. However, does not show cytotoxic activity towards human intestinal cells. This is Defensin alpha-like protein 1 from Rattus norvegicus (Rat).